The chain runs to 97 residues: Prophage lipoprotein Bor homolog (97 aa).

Positions 1–16 (MKKMLLATALALLITG) are cleaved as a signal peptide. C17 is lipidated: N-palmitoyl cysteine. C17 is lipidated: S-diacylglycerol cysteine.

This sequence belongs to the lambda phage bor family.

It is found in the cell membrane. The chain is Prophage lipoprotein Bor homolog (borD) from Escherichia coli (strain K12).